A 386-amino-acid polypeptide reads, in one-letter code: S-adenosylmethionine synthase (386 aa).

H16 serves as a coordination point for ATP. D18 serves as a coordination point for Mg(2+). E44 contributes to the K(+) binding site. The L-methionine site is built by E57 and Q100. Residues 100 to 110 are flexible loop; sequence QSRDITQGVDR. Residues 165 to 167, D240, 246 to 247, A263, and K267 contribute to the ATP site; these read DAK and RK. An L-methionine-binding site is contributed by D240. Residue K271 coordinates L-methionine.

The protein belongs to the AdoMet synthase family. In terms of assembly, homotetramer; dimer of dimers. The cofactor is Mg(2+). K(+) serves as cofactor.

It localises to the cytoplasm. The enzyme catalyses L-methionine + ATP + H2O = S-adenosyl-L-methionine + phosphate + diphosphate. It functions in the pathway amino-acid biosynthesis; S-adenosyl-L-methionine biosynthesis; S-adenosyl-L-methionine from L-methionine: step 1/1. Its function is as follows. Catalyzes the formation of S-adenosylmethionine (AdoMet) from methionine and ATP. The overall synthetic reaction is composed of two sequential steps, AdoMet formation and the subsequent tripolyphosphate hydrolysis which occurs prior to release of AdoMet from the enzyme. This Francisella tularensis subsp. tularensis (strain WY96-3418) protein is S-adenosylmethionine synthase.